Here is a 113-residue protein sequence, read N- to C-terminus: Dynein light chain Tctex-type 1 (113 aa).

At M1 the chain carries N-acetylmethionine. Residues 41–113 (QWTTNVVEQT…CIVSAFGLSI (73 aa)) are interaction with GNB1.

Belongs to the dynein light chain Tctex-type family. As to quaternary structure, homodimer. The cytoplasmic dynein 1 complex consists of two catalytic heavy chains (HCs) and a number of non-catalytic subunits presented by intermediate chains (ICs), light intermediate chains (LICs) and light chains (LCs); the composition seems to vary in respect to the IC, LIC and LC composition. The heavy chain homodimer serves as a scaffold for the probable homodimeric assembly of the non-catalytic subunits. The ICs and LICs bind directly to the HC dimer and the LCs assemble on the IC dimer. DYNLT1 and DYNLT3 compete for association with dynein IC (DYNC1I1 or DYNC1I2). Self-associates. Interacts with RHO. Interacts with DYNC1I1 and DYNC1I2. Interacts with DOC2A, DOC2B and SCN10A. Interacts with PVR. Interacts with SVIL isoform 2. Interacts with GNB1; the interaction occurs in presence of guanine nucleotide-binding protein G(T) subunit gamma; the interaction diminishes the association of DYNLT1 with dynein IC (DYNC1I1 or DYNC1I2). Interacts with GNB2, GNB3 and GNB5; the interactions occur in presence of guanine nucleotide-binding protein G(T) subunit gamma. Interacts with ACVR2B and ARHGEF2. Interacts with DNAI4. Interacts with CFAP61. Post-translationally, phosphorylated by BMPR2. The phosphorylation status is proposed to regulate the association with the cytoplasmic dynein complex and may have role in cytoplasmic dynein cargo release.

The protein localises to the golgi apparatus. The protein resides in the cytoplasm. Its subcellular location is the cytoskeleton. It is found in the spindle. Functionally, acts as one of several non-catalytic accessory components of the cytoplasmic dynein 1 complex that are thought to be involved in linking dynein to cargos and to adapter proteins that regulate dynein function. Cytoplasmic dynein 1 acts as a motor for the intracellular retrograde motility of vesicles and organelles along microtubules. Binds to transport cargos and is involved in apical cargo transport such as rhodopsin-bearing vesicles in polarized epithelia. May also be a accessory component of axonemal dynein. In terms of biological role, plays a role in neuronal morphogenesis; the function is independent of cytoplasmic dynein and seems to be coupled to regulation of the actin cytoskeleton by enhancing Rac1 activity. The function in neurogenesis may be regulated by association with a G-protein beta-gamma dimer. May function as a receptor-independent activator of heterotrimeric G-protein signaling; the activation appears to be independent of a nucleotide exchange. Plays a role in regulating neurogenesis; inhibits the genesis of neurons from precursor cells during cortical development presumably by antagonizing ARHGEF2. Involved in the regulation of mitotic spindle orientation. Unrelated to the role in retrograde microtubule-associated movement may play a role in the dimerization of cytoplasmic proteins/domains such as for ACVR2B. Binds to the cytoplasmic domain of ACVR2B and, in vitro, inhibits ACVR2B signaling. The polypeptide is Dynein light chain Tctex-type 1 (DYNLT1) (Bos taurus (Bovine)).